We begin with the raw amino-acid sequence, 239 residues long: MHKSSNFSGLNLVKSAPICLLDIFHRCVDSETALDTSLLYLIDMFGTAVFAVSGVLLAGRLKMDPFGVMVLASVTAIGGGTIRDMALGATPVFWIKDTNYLWVIMITCALTMLLVRRPKRLAWWILPVCDAIGLAVFVGIGVEKALIYQDSALIAIIMGVITGCGGGIIRDVLAREIPMVLRSEVYATACIIGGIFHTTALAMGYSSSTALLSGVFSTLLIRLGAIRWHLSLPTFALTK.

6 consecutive transmembrane segments (helical) span residues 38-58 (LLYLIDMFGTAVFAVSGVLLA), 62-82 (KMDPFGVMVLASVTAIGGGTI), 86-106 (ALGATPVFWIKDTNYLWVIMI), 122-142 (AWWILPVCDAIGLAVFVGIGV), 153-173 (LIAIIMGVITGCGGGIIRDVL), and 185-205 (VYATACIIGGIFHTTALAMGY).

The protein belongs to the UPF0126 family.

The protein resides in the cell membrane. This Vibrio cholerae serotype O1 (strain ATCC 39315 / El Tor Inaba N16961) protein is UPF0126 membrane protein VC_2382.